The following is a 275-amino-acid chain: Phosphate import ATP-binding protein PstB 2 (275 aa).

Positions 29–270 (LEVKNLNIYY…PSEKKTEDYI (242 aa)) constitute an ABC transporter domain. 61–68 (GPSGCGKS) is an ATP binding site.

The protein belongs to the ABC transporter superfamily. Phosphate importer (TC 3.A.1.7) family. The complex is composed of two ATP-binding proteins (PstB), two transmembrane proteins (PstC and PstA) and a solute-binding protein (PstS).

Its subcellular location is the cell membrane. It carries out the reaction phosphate(out) + ATP + H2O = ADP + 2 phosphate(in) + H(+). In terms of biological role, part of the ABC transporter complex PstSACB involved in phosphate import. Responsible for energy coupling to the transport system. This is Phosphate import ATP-binding protein PstB 2 from Bacillus licheniformis (strain ATCC 14580 / DSM 13 / JCM 2505 / CCUG 7422 / NBRC 12200 / NCIMB 9375 / NCTC 10341 / NRRL NRS-1264 / Gibson 46).